The sequence spans 199 residues: Ribonuclease P protein subunit p25 (199 aa).

A compositionally biased stretch (basic and acidic residues) spans 1 to 11; that stretch reads MENFRKVRSEE. Disordered regions lie at residues 1 to 28 and 144 to 199; these read MENFRKVRSEEAPAGCGAEGGGPGSGPF and LDPR…DQTA. Pro residues predominate over residues 151–166; the sequence is YQPPNPHPGPSSPPAA. Phosphoserine occurs at positions 172 and 182.

This sequence belongs to the histone-like Alba family. In terms of assembly, component of nuclear RNase P and RNase MRP ribonucleoproteins. RNase P consists of a catalytic RNA moiety and 10 different protein chains; POP1, POP4, POP5, POP7, RPP14, RPP21, RPP25, RPP30, RPP38 and RPP40. Within the RNase P complex, POP1, POP7 and RPP25 form the 'finger' subcomplex, POP5, RPP14, RPP40 and homodimeric RPP30 form the 'palm' subcomplex, and RPP21, POP4 and RPP38 form the 'wrist' subcomplex. All subunits of the RNase P complex interact with the catalytic RNA. Several subunits of RNase P are also part of the RNase MRP complex. RNase MRP consists of a catalytic RNA moiety and about 8 protein subunits; POP1, POP7, RPP25, RPP30, RPP38, RPP40 and possibly also POP4 and POP5. POP7 forms a heterodimer with RPP25 that binds to the P3 stem loop of the catalytic RNA.

It localises to the nucleus. The protein localises to the nucleolus. In terms of biological role, component of ribonuclease P, a ribonucleoprotein complex that generates mature tRNA molecules by cleaving their 5'-ends. Also a component of the MRP ribonuclease complex, which cleaves pre-rRNA sequences. The protein is Ribonuclease P protein subunit p25 (RPP25) of Homo sapiens (Human).